The primary structure comprises 701 residues: E3 ubiquitin-protein ligase RNF19B (701 aa).

The segment at 1–97 is disordered; sequence MGSEKDSESP…PAEPLSTSQA (97 aa). The segment at 1 to 304 is required for ubiquitin ligase activity and for protection against staurosporin-induced cell death; sequence MGSEKDSESP…VCGCEFCWLC (304 aa). Residues 57-72 show a composition bias toward low complexity; sequence QQLHQQQQIQQQQLLQ. The TRIAD supradomain stretch occupies residues 103–323; it reads ELLECPLCLV…LSPSGCTFWG (221 aa). Residues Cys107, Cys110, Cys130, Cys133, Cys194, Cys199, Cys216, Cys221, Cys226, Cys229, His234, Cys239, Cys273, and Cys276 each coordinate Zn(2+). The RING-type 1 zinc finger occupies 107–156; sequence CPLCLVRQPAEQLPELQGCSHRSCLCCLRQYLRIEITESRVQLSCPECAE. The segment at 174-239 adopts an IBR-type zinc-finger fold; it reads EKYEEFLLRR…KQAWHPNQTC (66 aa). An RING-type 2; atypical zinc finger spans residues 273-304; sequence CPRCGAYIIKMNDGSCNHMTCAVCGCEFCWLC. The active site involves Cys288. The Zn(2+) site is built by Cys293, Cys296, Cys301, Cys304, His312, and Cys319. 2 consecutive transmembrane segments (helical) span residues 340 to 360 and 396 to 416; these read LIGA…AMVI and IITA…IMLA. 2 disordered regions span residues 472 to 495 and 658 to 677; these read LEGA…PGGL and AELT…HGAP.

This sequence belongs to the RBR family. RNF19 subfamily. As to quaternary structure, interacts with UBE2L3, UBE2L6 and UCKL1.

It localises to the cytoplasmic granule membrane. Its subcellular location is the endoplasmic reticulum membrane. The catalysed reaction is [E2 ubiquitin-conjugating enzyme]-S-ubiquitinyl-L-cysteine + [acceptor protein]-L-lysine = [E2 ubiquitin-conjugating enzyme]-L-cysteine + [acceptor protein]-N(6)-ubiquitinyl-L-lysine.. Its pathway is protein modification; protein ubiquitination. Its function is as follows. E3 ubiquitin-protein ligase which accepts ubiquitin from E2 ubiquitin-conjugating enzymes UBE2L3 and UBE2L6 in the form of a thioester and then directly transfers the ubiquitin to targeted substrates, such as UCKL1. Involved in the cytolytic activity of natural killer cells and cytotoxic T-cells. Protects against staurosporin-induced cell death. The chain is E3 ubiquitin-protein ligase RNF19B (rnf19b) from Danio rerio (Zebrafish).